The following is a 181-amino-acid chain: Putative J domain-containing protein R266 (181 aa).

One can recognise a J domain in the interval 6-70 (NYYQILDVDN…LKRLNYDSYL (65 aa)).

The chain is Putative J domain-containing protein R266 from Acanthamoeba polyphaga (Amoeba).